The primary structure comprises 312 residues: Methionyl-tRNA formyltransferase (312 aa).

A disordered region spans residues 34-54; sequence PDAASGRRGKPQPSPVAREAA. A (6S)-5,6,7,8-tetrahydrofolate-binding site is contributed by 110-113; it reads SLLP.

This sequence belongs to the Fmt family.

It catalyses the reaction L-methionyl-tRNA(fMet) + (6R)-10-formyltetrahydrofolate = N-formyl-L-methionyl-tRNA(fMet) + (6S)-5,6,7,8-tetrahydrofolate + H(+). Functionally, attaches a formyl group to the free amino group of methionyl-tRNA(fMet). The formyl group appears to play a dual role in the initiator identity of N-formylmethionyl-tRNA by promoting its recognition by IF2 and preventing the misappropriation of this tRNA by the elongation apparatus. This chain is Methionyl-tRNA formyltransferase, found in Mycobacterium tuberculosis (strain ATCC 25177 / H37Ra).